We begin with the raw amino-acid sequence, 465 residues long: Glutamate--tRNA ligase 2 (465 aa).

Residues 8 to 18 (PSPTGLMHLGN) carry the 'HIGH' region motif. The 'KMSKS' region motif lies at 249–253 (PLSKR). ATP is bound at residue lysine 252.

Belongs to the class-I aminoacyl-tRNA synthetase family. Glutamate--tRNA ligase type 1 subfamily. In terms of assembly, monomer.

The protein resides in the cytoplasm. It catalyses the reaction tRNA(Glu) + L-glutamate + ATP = L-glutamyl-tRNA(Glu) + AMP + diphosphate. Functionally, catalyzes the attachment of glutamate to tRNA(Glu) in a two-step reaction: glutamate is first activated by ATP to form Glu-AMP and then transferred to the acceptor end of tRNA(Glu). The sequence is that of Glutamate--tRNA ligase 2 from Coxiella burnetii (strain RSA 331 / Henzerling II).